We begin with the raw amino-acid sequence, 332 residues long: Small ribosomal subunit biogenesis GTPase RsgA (332 aa).

In terms of domain architecture, CP-type G spans 103-259; the sequence is RQQLIAANLD…LIDTPGMREL (157 aa). GTP is bound by residues 148 to 151 and 201 to 209; these read TKVD and GSSGAGKST. The Zn(2+) site is built by C281, C286, H288, and C294.

This sequence belongs to the TRAFAC class YlqF/YawG GTPase family. RsgA subfamily. In terms of assembly, monomer. Associates with 30S ribosomal subunit, binds 16S rRNA. Zn(2+) is required as a cofactor.

It is found in the cytoplasm. Its function is as follows. One of several proteins that assist in the late maturation steps of the functional core of the 30S ribosomal subunit. Helps release RbfA from mature subunits. May play a role in the assembly of ribosomal proteins into the subunit. Circularly permuted GTPase that catalyzes slow GTP hydrolysis, GTPase activity is stimulated by the 30S ribosomal subunit. This chain is Small ribosomal subunit biogenesis GTPase RsgA, found in Xylella fastidiosa (strain M12).